The sequence spans 157 residues: Protein GrpE (157 aa).

Positions 1 to 10 (MQEENQHPEQ) are enriched in basic and acidic residues. Residues 1–21 (MQEENQHPEQDDISEAQDAGA) are disordered.

The protein belongs to the GrpE family. As to quaternary structure, homodimer.

It localises to the cytoplasm. Functionally, participates actively in the response to hyperosmotic and heat shock by preventing the aggregation of stress-denatured proteins, in association with DnaK and GrpE. It is the nucleotide exchange factor for DnaK and may function as a thermosensor. Unfolded proteins bind initially to DnaJ; upon interaction with the DnaJ-bound protein, DnaK hydrolyzes its bound ATP, resulting in the formation of a stable complex. GrpE releases ADP from DnaK; ATP binding to DnaK triggers the release of the substrate protein, thus completing the reaction cycle. Several rounds of ATP-dependent interactions between DnaJ, DnaK and GrpE are required for fully efficient folding. This Methylovorus sp. (strain SS1 / DSM 11726) protein is Protein GrpE.